The primary structure comprises 176 residues: Photosystem I assembly protein Ycf4 (176 aa).

The next 2 membrane-spanning stretches (helical) occupy residues 22 to 42 (FLWA…GTAS) and 57 to 77 (VMTF…SMLF).

Belongs to the Ycf4 family.

Its subcellular location is the plastid thylakoid membrane. Seems to be required for the assembly of the photosystem I complex. The protein is Photosystem I assembly protein Ycf4 of Cuscuta obtusiflora (Peruvian dodder).